A 43-amino-acid polypeptide reads, in one-letter code: Delta-actitoxin-Bca1a (43 aa).

Intrachain disulfides connect Cys-1–Cys-41, Cys-3–Cys-31, and Cys-24–Cys-42.

Its subcellular location is the secreted. The protein resides in the nematocyst. In terms of biological role, binds specifically to voltage-gated sodium channels (Nav), thereby delaying their inactivation during signal transduction. Thus it strongly stimulates mammalian cardiac muscle contraction. The chain is Delta-actitoxin-Bca1a from Bunodosoma capense (Knobbly sea anemone).